We begin with the raw amino-acid sequence, 321 residues long: MISVNEMGSYVIEEMLDWSEDLKTEVIKLENGATIIDCGIKAEGGYEAGMYLARLCLADLADLKYSTFDLNGIKWPAIQVATDNPVIACMASQYAGWRISVGNYFGMGSGPARALGLKPKELYEEIGYEDDFEAAVLVMESDKLPDEKVVEYIAKHCSVDPENVMIAVAPTASIAGSVQISARVVETGIHKFESIGFDINCIKSGYGIAPIAPIVGNDVQCMGSTNDCVIYCGETNYTVSFEGELAKLEDFVRKVPSTTSDDFGKPFYQTFKAANFDFFKVDAGMFAPARVTVNDLKNKKTISSGGLYPEILLESFGIRKV.

It belongs to the MCH family.

The protein localises to the cytoplasm. The enzyme catalyses 5,10-methenyl-5,6,7,8-tetrahydromethanopterin + H2O = N(5)-formyl-5,6,7,8-tetrahydromethanopterin + H(+). The protein operates within one-carbon metabolism; methanogenesis from CO(2); 5,10-methenyl-5,6,7,8-tetrahydromethanopterin from CO(2): step 3/3. In terms of biological role, catalyzes the reversible interconversion of 5-formyl-H(4)MPT to methenyl-H(4)MPT(+). The polypeptide is Methenyltetrahydromethanopterin cyclohydrolase (Methanosarcina mazei (strain ATCC BAA-159 / DSM 3647 / Goe1 / Go1 / JCM 11833 / OCM 88) (Methanosarcina frisia)).